The chain runs to 77 residues: Pi-stichotoxin-Hmg5a (77 aa).

An N-terminal signal peptide occupies residues 1–21; it reads MDYQRLLFLFAVAMVITTTVA. Positions 22–34 are excised as a propeptide; the sequence is LPQDTALMDGQLQ. Intrachain disulfides connect C40/C73, C42/C66, and C56/C74.

Belongs to the sea anemone type 3 (BDS) potassium channel toxin family.

It is found in the secreted. The protein resides in the nematocyst. Its function is as follows. Toxin that inhibits rat ASIC3 channels (IC(50)=13.8 uM). Also able to bind T.californica muscle-type nicotinic acetylcholine receptors (nAChR), and human alpha-7/CHRNA7 nicotinic acetylcholine receptors. The chain is Pi-stichotoxin-Hmg5a from Heteractis magnifica (Magnificent sea anemone).